Here is an 885-residue protein sequence, read N- to C-terminus: Leucine--tRNA ligase (885 aa).

The 'HIGH' region motif lies at Pro48–His58. Positions Thr639–Ser643 match the 'KMSKS' region motif. Residue Lys642 participates in ATP binding.

The protein belongs to the class-I aminoacyl-tRNA synthetase family.

It localises to the cytoplasm. The enzyme catalyses tRNA(Leu) + L-leucine + ATP = L-leucyl-tRNA(Leu) + AMP + diphosphate. In Bordetella avium (strain 197N), this protein is Leucine--tRNA ligase.